Here is a 670-residue protein sequence, read N- to C-terminus: MRTNRILNIICPPILFLLVGFLFGCVREDIESDMNETSSLFLQVQPYNQRSEEGGVAAYDENTIERLTLVFYKNGTKVWQAEPVETSPSSNSYYVPVPESMYGQFNGNNSFKIYLVANVNFSGSFEPNASETSFLKTLVPNSILLQNDGKPEDKFAMIGSVEKQINMATSEGKQLGSIELKRVAAKLRLKKPVLNISDYELVGDPKAKFRNCMPKGFLSVEEKPEGVGYEAIDYRPMTEANSSVHFYSYYNEWALNNEGRPEFVMMLKLKKTGTDDNTAKPYYYRIPVDGSDKKIRSNHLYDMAVTIEVLGSLNEEDPVTINGSLSVIEWTSHSDDQTLPDVQYLEVIPQETVMNMTTEIELDYFSSHSLLPPADVKATCTYVNSNGQQITDTYTGANVPTVTIDANTKKIKVRSILPINNIPKDISFTIKNSIGFEKKIKIRQNPSQFIINTFGTKSSWQPEGNLAPNLNNKAIYQIVVLSPPADGNMIIGFPPTKEVGFYKKSGSSYTLKHTDRITEQDEQTANMVSPSFELASQLGATLVQDHWEYYTLNPLRLIYHSNQQNRYALMTCAFYWEERKKADGTIERLDDWRLPTRAEIQLVDKLQREQAGVVRDIMTGRYYWSGLPDKAIKILLPTASGNATEQRAHVRCVRDVKNDRFVKSAKRLKK.

An N-terminal signal peptide occupies residues 1–24 (MRTNRILNIICPPILFLLVGFLFG). The N-palmitoyl cysteine moiety is linked to residue Cys-25. Cys-25 is lipidated: S-diacylglycerol cysteine. The propeptide occupies 25-50 (CVREDIESDMNETSSLFLQVQPYNQR).

The protein belongs to the FimD family. In terms of assembly, fimbriae are composed of a major, structural subunit and the minor components FimC, FimD and FimE. Identified in a complex composed of FimC, FimD and FimE (in vitro). The complex interacts with host extracellular matrix proteins, including fibronectin and type I collagen. Interacts with host CXCR4.

The protein resides in the fimbrium. The protein localises to the cell outer membrane. Probably a component of the fimbrium tip. These long, filamentous pili are attached to the cell surface; they mediate biofilm formation, adhesion onto host cells and onto other bacteria that are part of the oral microbiome. They play an important role in invasion of periodontal tissues and are major virulence factors. FimC, FimD and FimE contribute to interaction with host CXCR4 and thereby down-regulate the TLR2-mediated host immune response. The protein is Major fimbrium tip subunit FimD of Porphyromonas gingivalis (strain ATCC 33277 / DSM 20709 / CIP 103683 / JCM 12257 / NCTC 11834 / 2561).